Consider the following 316-residue polypeptide: Adenine deaminase (316 aa).

Residues His14, His16, and His194 each coordinate Zn(2+). The active-site Proton donor is Glu197. A Zn(2+)-binding site is contributed by Asp275. Asp276 serves as a coordination point for substrate.

This sequence belongs to the metallo-dependent hydrolases superfamily. Adenosine and AMP deaminases family. Adenine deaminase type 2 subfamily. Requires Zn(2+) as cofactor.

It carries out the reaction adenine + H2O + H(+) = hypoxanthine + NH4(+). In terms of biological role, catalyzes the hydrolytic deamination of adenine to hypoxanthine. Plays an important role in the purine salvage pathway and in nitrogen catabolism. The polypeptide is Adenine deaminase (Stutzerimonas stutzeri (strain A1501) (Pseudomonas stutzeri)).